The sequence spans 240 residues: ATP-dependent dethiobiotin synthetase BioD (240 aa).

13-18 (GVGKTI) lines the ATP pocket. Threonine 17 provides a ligand contact to Mg(2+). Lysine 38 is an active-site residue. Residue threonine 42 coordinates substrate. ATP is bound by residues aspartate 55, 116–119 (EGVG), and 214–216 (PYL). Residues aspartate 55 and glutamate 116 each contribute to the Mg(2+) site.

It belongs to the dethiobiotin synthetase family. In terms of assembly, homodimer. It depends on Mg(2+) as a cofactor.

It is found in the cytoplasm. The catalysed reaction is (7R,8S)-7,8-diammoniononanoate + CO2 + ATP = (4R,5S)-dethiobiotin + ADP + phosphate + 3 H(+). It functions in the pathway cofactor biosynthesis; biotin biosynthesis; biotin from 7,8-diaminononanoate: step 1/2. Functionally, catalyzes a mechanistically unusual reaction, the ATP-dependent insertion of CO2 between the N7 and N8 nitrogen atoms of 7,8-diaminopelargonic acid (DAPA, also called 7,8-diammoniononanoate) to form a ureido ring. This is ATP-dependent dethiobiotin synthetase BioD from Thermodesulfovibrio yellowstonii (strain ATCC 51303 / DSM 11347 / YP87).